The sequence spans 339 residues: Annexin A2 (339 aa).

At Ser-2 the chain carries N-acetylserine. An S100A10-binding site region spans residues 2–24 (STVHEILCKLSLEGDHSTPASAY). At Tyr-24 the chain carries Phosphotyrosine; by SRC. The residue at position 26 (Ser-26) is a Phosphoserine; by PKC. Annexin repeat units lie at residues 33–104 (FDAE…GLLK) and 105–176 (TPAQ…ALAK). N6-acetyllysine; alternate is present on Lys-49. Lys-49 is covalently cross-linked (Glycyl lysine isopeptide (Lys-Gly) (interchain with G-Cter in SUMO1); alternate). A Glycyl lysine isopeptide (Lys-Gly) (interchain with G-Cter in SUMO2); alternate cross-link involves residue Lys-49. Lys-152 carries the N6-acetyllysine modification. Residue Ser-184 is modified to Phosphoserine. Annexin repeat units lie at residues 189–261 (ELID…NLVQ) and 265–336 (NKPL…YLCG). Tyr-199 is modified (phosphotyrosine). Lys-227 carries the N6-acetyllysine modification.

The protein belongs to the annexin family. In terms of assembly, heterotetramer containing 2 light chains of S100A10/p11 and 2 heavy chains of ANXA2/p36. Interacts with ATP1B1. Interacts with DYSF. Interacts with COCH. Interacts (via repeat Annexin 1) with PCSK9 (via the C-terminal domain); the interaction inhibits the degradation of LDLR. Interacts with CEACAM1 (via the cytoplasmic domain); this interaction is regulated by phosphorylation of CEACAM1. Interacts with APPL2 and APPL1; targets APPL2 to endosomes and acting in parallel to RAB5A. Interacts with S100A4. May interact with UBAP2. Interacts with PLEKHG4B; this interaction is required for PLEKHG4B localization to cell-cell adhesions. (Microbial infection) Interacts with classical swine fever virus envelope glycoprotein E2. In terms of processing, ISGylated.

The protein localises to the secreted. The protein resides in the extracellular space. It is found in the extracellular matrix. It localises to the basement membrane. Its subcellular location is the melanosome. Calcium-regulated membrane-binding protein whose affinity for calcium is greatly enhanced by anionic phospholipids. It binds two calcium ions with high affinity. May be involved in heat-stress response. Inhibits PCSK9-enhanced LDLR degradation, probably reduces PCSK9 protein levels via a translational mechanism but also competes with LDLR for binding with PCSK9. Binds to endosomes damaged by phagocytosis of particulate wear debris and participates in endosomal membrane stabilization, thereby limiting NLRP3 inflammasome activation. Required for endothelial cell surface plasmin generation and may support fibrinolytic surveillance and neoangiogenesis. Functionally, (Microbial infection) May serve as a receptor for classical swine fever virus (CSFV). Promotes CSFV infection. The sequence is that of Annexin A2 (ANXA2) from Sus scrofa (Pig).